We begin with the raw amino-acid sequence, 342 residues long: Photosystem II assembly lipoprotein Ycf48 (342 aa).

Residues 1 to 28 (MPVKFPSLKFEQLKQLVLVAAIAVFCVS) form the signal peptide. C29 carries N-palmitoyl cysteine lipidation. A lipid anchor (S-diacylglycerol cysteine) is attached at C29. An Arg-rich patch motif is present at residues 196-220 (RGNFYSTWAPGQTEWTPHNRNSSRR). Residues 340-342 (MVP) constitute a propeptide that is removed on maturation.

It belongs to the Ycf48 family. As to quaternary structure, part of early PSII assembly complexes which includes D1 (psbA) and PsbI; not found in mature PSII. By two-hybrid analysis in yeast interacts with precursor and intermediate forms of D1, but less with mature D1. Binds to the lumenal side of PSI and PSII complexes. Coimmunoprecipitates with YidC. Purified chlorophyll- and carotenoid-containing photosystem II (PSII) assembly intermediate complex RCII* (iD1, D1, D2, PsbE, PsbF, PsbI, Ycf39, Ycf48, HliC and HliD). Post-translationally, the last 3 residues are removed in the mature protein.

The protein resides in the cellular thylakoid membrane. Functionally, a factor required for optimal assembly of photosystem II (PSII) which acts in the early stages of PSII assembly. Also plays a role in replacement of photodamaged D1 (psbA). May interact with precursor D1 to prevent its premature processing before association with D2 (psbD). May also play a role in chlorophyll insertion into chlorophyll-binding proteins. Increasing levels of chlorophyll precursors partially suppresses deletion of this protein, supporting the idea that Ycf48 assists YidC in synthesis of chlorophyll-binding proteins. The Ycf39-Hlip complex binds D1 at an early stage of PSII assembly along with Ycf48, ribosomes and ChlG, the last enzyme in chlorophyll biosynthesis; it may be involved in chlorophyll reuse and delivery to D1 in the initial stages of PSII assembly. This Synechocystis sp. (strain ATCC 27184 / PCC 6803 / Kazusa) protein is Photosystem II assembly lipoprotein Ycf48.